A 578-amino-acid chain; its full sequence is Matrix metalloproteinase-17 (578 aa).

Disordered regions lie at residues 1–22 (MGRR…PGPG) and 107–133 (PRCS…TKWS). The N-terminal stretch at 1–39 (MGRRPRGPGSPRGPGPPRPGPGLPPLLLVLALAAHGGCA) is a signal peptide. Over residues 11–22 (PRGPGPPRPGPG) the composition is skewed to pro residues. A propeptide spanning residues 40 to 124 (APAPRAEDLS…PPGAQSRRKR (85 aa)) is cleaved from the precursor. Positions 107–114 (PRCSLPDL) match the Cysteine switch motif. Cysteine 109 is a Zn(2+) binding site. N-linked (GlcNAc...) asparagine glycosylation is present at asparagine 136. Histidine 247 lines the Zn(2+) pocket. Glutamate 248 is a catalytic residue. 2 residues coordinate Zn(2+): histidine 251 and histidine 257. The interval 301-334 (PTAQLDTPEPEEPPLLPEPPNNRSSTPPQKDVPH) is disordered. N-linked (GlcNAc...) asparagine glycosylation is present at asparagine 322. Hemopexin repeat units lie at residues 333–382 (PHRC…WRGL), 386–432 (LDSV…SLPP), 436–479 (DAVF…WRGV), and 480–527 (PSML…WLVC). An intrachain disulfide couples cysteine 336 to cysteine 527. Serine 558 carries GPI-anchor amidated serine lipidation. The propeptide at 559 to 578 (DAHRLALPSLLLLTPLLWGL) is removed in mature form.

Belongs to the peptidase M10A family. Zn(2+) serves as cofactor. It depends on Ca(2+) as a cofactor. Post-translationally, the precursor is cleaved by a furin endopeptidase. In terms of tissue distribution, expressed by monocytes and macrophages.

It localises to the cell membrane. Its subcellular location is the secreted. The protein localises to the extracellular space. The protein resides in the extracellular matrix. Endopeptidase that degrades various components of the extracellular matrix, such as fibrin. May be involved in the activation of membrane-bound precursors of growth factors or inflammatory mediators, such as tumor necrosis factor-alpha. May also be involved in tumoral process. Not obvious if able to proteolytically activate progelatinase A. Does not hydrolyze collagen types I, II, III, IV and V, gelatin, fibronectin, laminin, decorin nor alpha1-antitrypsin. This is Matrix metalloproteinase-17 (Mmp17) from Mus musculus (Mouse).